Reading from the N-terminus, the 842-residue chain is Serine/threonine-protein kinase CLA4 (842 aa).

The tract at residues 12–34 is disordered; it reads DNDFQNIGPAPRPPSSNSQGRTC. Ser-29 and Ser-46 each carry phosphoserine. Residues 61-179 form the PH domain; that stretch reads SKKKSGWVSY…WLDAIFAKCP (119 aa). The region spanning 184-197 is the CRIB domain; it reads VSSPTNFTHKVHVG. Residues 247–274 are compositionally biased toward polar residues; the sequence is GNPTNTLDKPQSGETSSSQKSLPNSYND. The disordered stretch occupies residues 247–524; it reads GNPTNTLDKP…KPKKPARPTM (278 aa). Residues 279-296 show a composition bias toward low complexity; it reads NNSVNSKSSSGVSSSMVS. Residues 297–307 are compositionally biased toward polar residues; it reads QRKTSQPPNTK. Positions 308-319 are enriched in low complexity; it reads SPVSLGSGSLPP. Over residues 323–343 the composition is skewed to polar residues; that stretch reads KLPTSQSNIPRHLQNVPNQQY. A phosphoserine mark is found at Ser-351 and Ser-367. Residues 372 to 387 are compositionally biased toward low complexity; it reads QQQQQQQQQQKQQHQQ. A compositionally biased stretch (pro residues) spans 396 to 408; it reads SPSPSPSPSPLNP. Positions 418-435 are enriched in low complexity; that stretch reads PYSKQPQSPLSSQSTQNQ. At Ser-425 the chain carries Phosphoserine. Composition is skewed to polar residues over residues 470 to 481 and 488 to 497; these read PSNQNATSNTHV and NDQSTPQTMR. Positions 546-825 constitute a Protein kinase domain; that stretch reads FKVIEKAGQG…TEELLHHGFF (280 aa). ATP contacts are provided by residues 552 to 560 and Lys-594; that span reads AGQGASGSV. The active-site Proton acceptor is Asp-693.

Belongs to the protein kinase superfamily. STE Ser/Thr protein kinase family. STE20 subfamily. In terms of assembly, interacts with CDC42.

The catalysed reaction is L-seryl-[protein] + ATP = O-phospho-L-seryl-[protein] + ADP + H(+). The enzyme catalyses L-threonyl-[protein] + ATP = O-phospho-L-threonyl-[protein] + ADP + H(+). Its function is as follows. Involved in budding and cytokinesis. The sequence is that of Serine/threonine-protein kinase CLA4 (CLA4) from Saccharomyces cerevisiae (strain ATCC 204508 / S288c) (Baker's yeast).